Here is a 141-residue protein sequence, read N- to C-terminus: General odorant-binding protein 57b (141 aa).

The signal sequence occupies residues 1 to 22 (MFIYRLVFIAPLILLLFSLAKA). 3 disulfide bridges follow: C39-C77, C73-C120, and C111-C129.

The protein belongs to the PBP/GOBP family.

In terms of biological role, present in the aqueous fluid surrounding olfactory sensory dendrites and are thought to aid in the capture and transport of hydrophobic odorants into and through this fluid. The chain is General odorant-binding protein 57b from Drosophila melanogaster (Fruit fly).